A 441-amino-acid polypeptide reads, in one-letter code: GTPase Der (441 aa).

EngA-type G domains are found at residues P4–I168 and I177–S352. Residues G10–S17, D57–I61, N121–E124, G183–S190, D230–M234, and N295–D298 contribute to the GTP site. The region spanning T353–D437 is the KH-like domain.

It belongs to the TRAFAC class TrmE-Era-EngA-EngB-Septin-like GTPase superfamily. EngA (Der) GTPase family. In terms of assembly, associates with the 50S ribosomal subunit.

Its function is as follows. GTPase that plays an essential role in the late steps of ribosome biogenesis. The protein is GTPase Der of Desulfitobacterium hafniense (strain Y51).